Consider the following 278-residue polypeptide: MTEIKVPIAGVIGNPITHSRSPHLHRHWLHVYGIEGYYVPLHVQGQDLAEVFHALPKLGFKGVNVTLPFKERAIELADRVSDRAALIGAANTITFQPDGTIHADNTDGYGFIENLRNGAPGWSPRAAAIVVLGAGGAARGVLSALLEAGAPEVRLANRTRAKAEALRSDFGPRVTVVDWHGVSGTMEDAETLVNTTSLGMTGQPDLELNLDALPRSAVVTDIVYRPLMTPLLEQAVARGNPVVDGLGMLLFQAAPGFERWFGVRPEITPELRAAALAE.

Shikimate-binding positions include 19-21 (SRS) and threonine 66. Lysine 70 functions as the Proton acceptor in the catalytic mechanism. Aspartate 82 lines the NADP(+) pocket. Asparagine 91 and aspartate 107 together coordinate shikimate. Residues 133 to 137 (GAGGA), 157 to 162 (NRTRAK), and isoleucine 222 each bind NADP(+). Position 224 (tyrosine 224) interacts with shikimate. NADP(+) is bound at residue glycine 245.

This sequence belongs to the shikimate dehydrogenase family. Homodimer.

It carries out the reaction shikimate + NADP(+) = 3-dehydroshikimate + NADPH + H(+). The protein operates within metabolic intermediate biosynthesis; chorismate biosynthesis; chorismate from D-erythrose 4-phosphate and phosphoenolpyruvate: step 4/7. Involved in the biosynthesis of the chorismate, which leads to the biosynthesis of aromatic amino acids. Catalyzes the reversible NADPH linked reduction of 3-dehydroshikimate (DHSA) to yield shikimate (SA). This chain is Shikimate dehydrogenase (NADP(+)), found in Dinoroseobacter shibae (strain DSM 16493 / NCIMB 14021 / DFL 12).